A 378-amino-acid chain; its full sequence is Chaperone protein DnaJ (378 aa).

In terms of domain architecture, J spans 5–70; that stretch reads DYYEVLGVGR…NKKAAYDQFG (66 aa). The CR-type zinc finger occupies 134-212; sequence GLTKELRIPT…CHGDGRVEKT (79 aa). Residues cysteine 147, cysteine 150, cysteine 164, cysteine 167, cysteine 186, cysteine 189, cysteine 200, and cysteine 203 each contribute to the Zn(2+) site. 4 CXXCXGXG motif repeats span residues 147-154, 164-171, 186-193, and 200-207; these read CDVCDGSG, CTTCHGQG, CPTCHGRG, and CAKCHGDG.

It belongs to the DnaJ family. Homodimer. Requires Zn(2+) as cofactor.

The protein resides in the cytoplasm. Participates actively in the response to hyperosmotic and heat shock by preventing the aggregation of stress-denatured proteins and by disaggregating proteins, also in an autonomous, DnaK-independent fashion. Unfolded proteins bind initially to DnaJ; upon interaction with the DnaJ-bound protein, DnaK hydrolyzes its bound ATP, resulting in the formation of a stable complex. GrpE releases ADP from DnaK; ATP binding to DnaK triggers the release of the substrate protein, thus completing the reaction cycle. Several rounds of ATP-dependent interactions between DnaJ, DnaK and GrpE are required for fully efficient folding. Also involved, together with DnaK and GrpE, in the DNA replication of plasmids through activation of initiation proteins. The chain is Chaperone protein DnaJ from Shewanella oneidensis (strain ATCC 700550 / JCM 31522 / CIP 106686 / LMG 19005 / NCIMB 14063 / MR-1).